Here is a 393-residue protein sequence, read N- to C-terminus: Beta-1,4-galactosyltransferase 3 (393 aa).

The Cytoplasmic segment spans residues 1–10; it reads MLRRLLERPC. A helical; Signal-anchor for type II membrane protein transmembrane segment spans residues 11 to 31; the sequence is TLALLVGSQLAVMMYLSLGGF. Residues 32–393 lie on the Lumenal side of the membrane; that stretch reads RSLSALFGRD…ANHTALRGSH (362 aa). An N-linked (GlcNAc...) asparagine glycan is attached at N57. The cysteines at positions 77 and 119 are disulfide-linked. 130–134 provides a ligand contact to UDP-alpha-D-galactose; that stretch reads PHRAR. N166 carries an N-linked (GlcNAc...) asparagine glycan. UDP-alpha-D-galactose contacts are provided by residues 169 to 171, 196 to 197, Y226, and W258; these read FNR and VD. The cysteines at positions 190 and 209 are disulfide-linked. Residue D197 coordinates Mn(2+). Residue 260–263 participates in N-acetyl-D-glucosamine binding; sequence GEDD. H291 contributes to the Mn(2+) binding site. 291-293 serves as a coordination point for UDP-alpha-D-galactose; it reads HRG. R303 is a binding site for N-acetyl-D-glucosamine. 2 N-linked (GlcNAc...) asparagine glycosylation sites follow: N337 and N385. The tract at residues 339-393 is disordered; it reads TADIGTDPRGPRAPSGPRYPPGSSQAFRQEMLQRRPPARPGPLSTANHTALRGSH.

This sequence belongs to the glycosyltransferase 7 family. Mn(2+) is required as a cofactor. In terms of tissue distribution, found in various tissues. Highest expression in placenta, prostate, testis, ovary, intestine and muscle, and in fetal brain.

It is found in the golgi apparatus. The protein localises to the golgi stack membrane. The catalysed reaction is an N-acetyl-beta-D-glucosaminyl derivative + UDP-alpha-D-galactose = a beta-D-galactosyl-(1-&gt;4)-N-acetyl-beta-D-glucosaminyl derivative + UDP + H(+). The enzyme catalyses N-acetyl-D-glucosamine + UDP-alpha-D-galactose = beta-D-galactosyl-(1-&gt;4)-N-acetyl-D-glucosamine + UDP + H(+). It carries out the reaction a beta-D-GlcNAc-(1-&gt;3)-beta-D-Gal-(1-&gt;4)-beta-D-Glc-(1&lt;-&gt;1)-Cer(d18:1(4E)) + UDP-alpha-D-galactose = a neolactoside nLc4Cer(d18:1(4E)) + UDP + H(+). It catalyses the reaction a beta-D-glucosylceramide + UDP-alpha-D-galactose = a beta-D-galactosyl-(1-&gt;4)-beta-D-glucosyl-(1&lt;-&gt;1)-ceramide + UDP + H(+). The catalysed reaction is a neolactoside IV(3)-beta-GlcNAc-nLc4Cer + UDP-alpha-D-galactose = a neolactoside nLc6Cer + UDP + H(+). The protein operates within protein modification; protein glycosylation. Its function is as follows. Responsible for the synthesis of complex-type N-linked oligosaccharides in many glycoproteins as well as the carbohydrate moieties of glycolipids. The polypeptide is Beta-1,4-galactosyltransferase 3 (Homo sapiens (Human)).